The following is a 236-amino-acid chain: 2-C-methyl-D-erythritol 4-phosphate cytidylyltransferase (236 aa).

Belongs to the IspD/TarI cytidylyltransferase family. IspD subfamily. Homodimer.

The enzyme catalyses 2-C-methyl-D-erythritol 4-phosphate + CTP + H(+) = 4-CDP-2-C-methyl-D-erythritol + diphosphate. The protein operates within isoprenoid biosynthesis; isopentenyl diphosphate biosynthesis via DXP pathway; isopentenyl diphosphate from 1-deoxy-D-xylulose 5-phosphate: step 2/6. Catalyzes the formation of 4-diphosphocytidyl-2-C-methyl-D-erythritol from CTP and 2-C-methyl-D-erythritol 4-phosphate (MEP). The chain is 2-C-methyl-D-erythritol 4-phosphate cytidylyltransferase from Escherichia coli O45:K1 (strain S88 / ExPEC).